We begin with the raw amino-acid sequence, 63 residues long: MRIHYLLFSFLLVLLSPLSAFSKKVYNAVSCMTNGGICWLKCSGTFREIGSCGTRQLKCCKKK.

The signal sequence occupies residues 1–20; the sequence is MRIHYLLFSFLLVLLSPLSA. Positions 21–22 are excised as a propeptide; the sequence is FS. 3 cysteine pairs are disulfide-bonded: Cys-31/Cys-59, Cys-38/Cys-52, and Cys-42/Cys-60.

It belongs to the beta-defensin family.

The protein resides in the secreted. Its function is as follows. Has bactericidal activity. In Rattus norvegicus (Rat), this protein is Beta-defensin 3 (Defb3).